We begin with the raw amino-acid sequence, 148 residues long: Small ribosomal subunit protein uS13 (148 aa).

The protein belongs to the universal ribosomal protein uS13 family. As to quaternary structure, part of the 30S ribosomal subunit. Forms a loose heterodimer with protein S19. Forms two bridges to the 50S subunit in the 70S ribosome.

In terms of biological role, located at the top of the head of the 30S subunit, it contacts several helices of the 16S rRNA. In the 70S ribosome it contacts the 23S rRNA (bridge B1a) and protein L5 of the 50S subunit (bridge B1b), connecting the 2 subunits; these bridges are implicated in subunit movement. In Pyrococcus horikoshii (strain ATCC 700860 / DSM 12428 / JCM 9974 / NBRC 100139 / OT-3), this protein is Small ribosomal subunit protein uS13.